We begin with the raw amino-acid sequence, 1127 residues long: Disease resistance protein RPS6 (1127 aa).

Residue M1 is modified to N-acetylmethionine. In terms of domain architecture, TIR spans 12 to 176; sequence WSYHVFPSFS…EIANDILGKM (165 aa). E87 is a catalytic residue. LRR repeat units follow at residues 197 to 221, 540 to 563, 587 to 609, 610 to 632, 633 to 656, 658 to 679, 680 to 704, 766 to 790, 791 to 813, 814 to 834, and 835 to 857; these read MSSL…GIGK, IDET…LFLK, PSRL…NFHP, ENLV…VHSL, AGLR…SMAT, LETL…IQYL, NKLN…NLKS, SPTL…IQNL, YQLE…GINL, DSLI…PDIS, and TNIS…IEKL.

As to quaternary structure, interacts with EDS1. In terms of tissue distribution, ubiquitous.

The catalysed reaction is NAD(+) + H2O = ADP-D-ribose + nicotinamide + H(+). In terms of biological role, disease resistance (R) protein that specifically recognizes the hopA1 type III effector avirulence protein from Pseudomonas syringae. Resistance proteins guard the plant against pathogens that contain an appropriate avirulence protein via an indirect interaction with this avirulence protein. That triggers a defense system including the hypersensitive response, which restricts the pathogen growth. This chain is Disease resistance protein RPS6, found in Arabidopsis thaliana (Mouse-ear cress).